Reading from the N-terminus, the 191-residue chain is Rho-related GTP-binding protein RhoH (191 aa).

Residue 11-18 coordinates GTP; it reads GDSAVGKT. An Effector region motif is present at residues 33–41; sequence YKPTVYENT. 58–62 serves as a coordination point for GTP; the sequence is DTAGN. Positions 73–86 are interaction with ZAP70; the sequence is YQQADVVLMCYSVA. A GTP-binding site is contributed by 116 to 119; the sequence is TQTD. Position 188 is a cysteine methyl ester (cysteine 188). Cysteine 188 carries S-geranylgeranyl cysteine lipidation. A propeptide spans 189–191 (removed in mature form); the sequence is KIF.

This sequence belongs to the small GTPase superfamily. Rho family. As to quaternary structure, interacts with GDI1 and GDI2. Interacts with ZAP70 (via SH2 domains) and the interaction is enhanced by its phosphorylation by LCK. Interacts with SYK and the interaction is enhanced by its phosphorylation by FYN. Phosphorylated on tyrosine by LCK. Phosphorylated by FYN. Phosphorylation enhances the interactions with ZAP70 and SYK and is critical for its function in thymocyte development. In terms of tissue distribution, expression is widespread in hematopoietic cells, including in bone marrow progenitor cells and in differentiated myeloid as well as lymphoid cells. Expressed at high levels in the thymus and mast cells, found in spleen and low-density bone marrow (LDBM) cells and is detected at a low level in neutrophils. In the thymus it is detected in thymocytes of the thymic cortex but not in non-lymphoid cells of fibrovascular and fibroadipose tissues. Expressed in T-cells, B-cells and mast cells.

The protein localises to the cytoplasm. It is found in the cell membrane. Its function is as follows. Binds GTP but lacks intrinsic GTPase activity and is resistant to Rho-specific GTPase-activating proteins. Inhibits the activation of NF-kappa-B by TNF and IKKB and the activation of CRK/p38 by TNF. Inhibits activities of RAC1, RHOA and CDC42. Negatively regulates leukotriene production in neutrophils. Negative regulator of hematopoietic progenitor cell proliferation, survival and migration. Critical regulator of thymocyte development and T-cell antigen receptor (TCR) signaling by mediating recruitment and activation of ZAP70. Required for phosphorylation of CD3Z, membrane translocation of ZAP70 and subsequent activation of the ZAP70-mediated pathways. Essential for efficient beta-selection and positive selection by promoting the ZAP70-dependent phosphorylation of the LAT signalosome during pre-TCR and TCR signaling. Crucial for thymocyte maturation during DN3 to DN4 transition and during positive selection. Plays critical roles in mast cell function by facilitating phosphorylation of SYK in Fc epsilon RI-mediated signal transduction. Essential for the phosphorylation of LAT, LCP2, PLCG1 and PLCG2 and for Ca(2+) mobilization in mast cells. This is Rho-related GTP-binding protein RhoH (Rhoh) from Mus musculus (Mouse).